A 357-amino-acid chain; its full sequence is Arginine kinase (357 aa).

Residue alanine 2 is modified to N-acetylalanine. The 83-residue stretch at lysine 9–lysine 91 folds into the Phosphagen kinase N-terminal domain. Residue glycine 64–tyrosine 68 participates in L-arginine binding. In terms of domain architecture, Phosphagen kinase C-terminal spans phenylalanine 119 to methionine 356. ATP is bound by residues serine 122 to arginine 126 and histidine 185. Position 225 (glutamate 225) interacts with L-arginine. Arginine 229 contacts ATP. Position 271 (cysteine 271) interacts with L-arginine. Residues arginine 280 to histidine 284 and arginine 309 to glutamate 314 each bind ATP. Position 314 (glutamate 314) interacts with L-arginine.

The protein belongs to the ATP:guanido phosphotransferase family.

The enzyme catalyses L-arginine + ATP = N(omega)-phospho-L-arginine + ADP + H(+). The protein is Arginine kinase of Carcinus maenas (Common shore crab).